The sequence spans 151 residues: Deoxyuridine 5'-triphosphate nucleotidohydrolase (151 aa).

Residues 70–72 (RSG), N83, 87–89 (LID), and M97 contribute to the substrate site.

Belongs to the dUTPase family. The cofactor is Mg(2+).

The catalysed reaction is dUTP + H2O = dUMP + diphosphate + H(+). It participates in pyrimidine metabolism; dUMP biosynthesis; dUMP from dCTP (dUTP route): step 2/2. This enzyme is involved in nucleotide metabolism: it produces dUMP, the immediate precursor of thymidine nucleotides and it decreases the intracellular concentration of dUTP so that uracil cannot be incorporated into DNA. The chain is Deoxyuridine 5'-triphosphate nucleotidohydrolase from Pasteurella multocida (strain Pm70).